Reading from the N-terminus, the 388-residue chain is Na(+)/H(+) antiporter NhaA (388 aa).

Helical transmembrane passes span 8–28 (FFSAASGGAIILLLSALLGLL), 57–77 (LAEFISIAPMSLFFFVVIAEI), 93–113 (ILPLISALGGMMIPACLYGLI), 123–143 (GWAIPIATDAAFTLPIILALG), 152–172 (VWLMALAIFDDLLGIVVIALF), 175–195 (SHLNGYALFAAGLITAVMIGL), 210–230 (GVVLWWALLVSGLHPTIAGVI), 254–274 (IIAPWVTWLILPLFGFVSMGM), 278–298 (AMSFHVLLAPVPLGVALGLFL), 328–348 (LFGLSLLCGIGFTISLFIAEL), and 361–381 (YGILMGSLLSALAGWLWLRFL).

It belongs to the NhaA Na(+)/H(+) (TC 2.A.33) antiporter family.

The protein localises to the cell inner membrane. It carries out the reaction Na(+)(in) + 2 H(+)(out) = Na(+)(out) + 2 H(+)(in). In terms of biological role, na(+)/H(+) antiporter that extrudes sodium in exchange for external protons. In Zymomonas mobilis subsp. mobilis (strain ATCC 31821 / ZM4 / CP4), this protein is Na(+)/H(+) antiporter NhaA.